The chain runs to 428 residues: Histidine--tRNA ligase (428 aa).

The protein belongs to the class-II aminoacyl-tRNA synthetase family. As to quaternary structure, homodimer.

It localises to the cytoplasm. It catalyses the reaction tRNA(His) + L-histidine + ATP = L-histidyl-tRNA(His) + AMP + diphosphate + H(+). This Buchnera aphidicola subsp. Schizaphis graminum (strain Sg) protein is Histidine--tRNA ligase.